Reading from the N-terminus, the 163-residue chain is Phosphopantetheine adenylyltransferase (163 aa).

Substrate is bound at residue threonine 9. Residues 9 to 10 and histidine 17 each bind ATP; that span reads TF. Lysine 41, leucine 76, and arginine 90 together coordinate substrate. ATP is bound by residues 91 to 93, glutamate 101, and 126 to 132; these read GLR and YSFISST.

This sequence belongs to the bacterial CoaD family. Homohexamer. Mg(2+) serves as cofactor.

The protein resides in the cytoplasm. The catalysed reaction is (R)-4'-phosphopantetheine + ATP + H(+) = 3'-dephospho-CoA + diphosphate. The protein operates within cofactor biosynthesis; coenzyme A biosynthesis; CoA from (R)-pantothenate: step 4/5. Its function is as follows. Reversibly transfers an adenylyl group from ATP to 4'-phosphopantetheine, yielding dephospho-CoA (dPCoA) and pyrophosphate. The protein is Phosphopantetheine adenylyltransferase of Dichelobacter nodosus (strain VCS1703A).